The primary structure comprises 202 residues: Holliday junction branch migration complex subunit RuvA (202 aa).

Positions 1 to 63 are domain I; that stretch reads MIAFLSGRVV…EDSLTLFGFA (63 aa). The segment at 64–142 is domain II; sequence DDDERDTFER…EPGGDTAATP (79 aa). Positions 143-152 are flexible linker; that stretch reads EQSAAAAPRN. The tract at residues 152–202 is domain III; it reads NWRAQVVSGLVNLGWSTREAEAAADAVAAEAGEQPDVAALLRSALRRLSRA.

It belongs to the RuvA family. In terms of assembly, homotetramer. Forms an RuvA(8)-RuvB(12)-Holliday junction (HJ) complex. HJ DNA is sandwiched between 2 RuvA tetramers; dsDNA enters through RuvA and exits via RuvB. An RuvB hexamer assembles on each DNA strand where it exits the tetramer. Each RuvB hexamer is contacted by two RuvA subunits (via domain III) on 2 adjacent RuvB subunits; this complex drives branch migration. In the full resolvosome a probable DNA-RuvA(4)-RuvB(12)-RuvC(2) complex forms which resolves the HJ.

The protein localises to the cytoplasm. In terms of biological role, the RuvA-RuvB-RuvC complex processes Holliday junction (HJ) DNA during genetic recombination and DNA repair, while the RuvA-RuvB complex plays an important role in the rescue of blocked DNA replication forks via replication fork reversal (RFR). RuvA specifically binds to HJ cruciform DNA, conferring on it an open structure. The RuvB hexamer acts as an ATP-dependent pump, pulling dsDNA into and through the RuvAB complex. HJ branch migration allows RuvC to scan DNA until it finds its consensus sequence, where it cleaves and resolves the cruciform DNA. This Thermobifida fusca (strain YX) protein is Holliday junction branch migration complex subunit RuvA.